The sequence spans 489 residues: MLAPVLMVVGTASSVGKSTLVSALCRIAARRGIRVAPFKAQNMSNNAAVTANGEEIARSIAVQAAAAKLTPSVQMNPILIKPEGQRRSQIIVQGRPWQTLEAIDYWQRKQLLWEIVTNSLDQLRQAYDLVIAEGAGSPVELNLKAHDITNMRVATYAQAQTLLVGDIDVGGIFAAMLGTLMLLEPEERQLIAGLIVNRFRGDPDLFTDGIQILEQRSNKPVLGVVPWLPQLGLPEEDAVALERPDQTTNNAALTIGVIQLPAIANFDDFDPLAQEQGVAVRYINQPHELQHCQALILPGTKHTLAARQWLTEQGFDQAIQQFQGPIVGICGGYQLLGQQIDDPEAVEGIGGSMAGLGLLPITTIFQRHKQTRQVQALSNLPWAKAYPLAGYEIHMGRTELLADQPAFSIQQAESTHADGCMRANGKVWGCYIHGIFANTEFRQAWLSRLGWQVQSAIQPIDPFERLADHVEACLEPNLLTKLLGQEIRD.

Residues 252–441 (ALTIGVIQLP…IHGIFANTEF (190 aa)) form the GATase cobBQ-type domain. C330 functions as the Nucleophile in the catalytic mechanism. H433 is an active-site residue.

The protein belongs to the CobB/CobQ family. CobQ subfamily.

The protein operates within cofactor biosynthesis; adenosylcobalamin biosynthesis. Functionally, catalyzes amidations at positions B, D, E, and G on adenosylcobyrinic A,C-diamide. NH(2) groups are provided by glutamine, and one molecule of ATP is hydrogenolyzed for each amidation. The chain is Cobyric acid synthase from Herpetosiphon aurantiacus (strain ATCC 23779 / DSM 785 / 114-95).